Reading from the N-terminus, the 456-residue chain is Ribonuclease inhibitor (456 aa).

An N-acetylmethionine modification is found at methionine 1. 15 LRR repeats span residues 15–43 (WTEL…CKDI), 44–71 (SSAV…VGLV), 72–100 (LQGL…CGIL), 101–128 (PGML…LKLL), 129–157 (CEGL…CEPL), 158–185 (ASVL…VRIL), 186–214 (CQGL…CKDL), 215–242 (CDVV…IAAL), 243–271 (CPGL…CKDL), 272–299 (CRVL…ARLL), 300–328 (CESL…CPYF), 329–356 (CSVL…VQEL), 357–385 (CKAL…CSSL), 386–413 (ANVL…VLQL), and 414–442 (LESL…EEQL). Phosphoserine is present on serine 86.

As to quaternary structure, forms high-affinity heterodimers with RNASE1, ANG and RNASE2.

It is found in the cytoplasm. It localises to the nucleus. In terms of biological role, ribonuclease inhibitor which inhibits RNASE1, RNASE2 and angiogenin (ANG). May play a role in redox homeostasis. Required to inhibit the cytotoxic tRNA ribonuclease activity of ANG in the cytoplasm in absence of stress. Relocates to the nucleus in response to stress, relieving inhibition of ANG in the cytoplasm, and inhibiting the angiogenic activity of ANG in the nucleus. This Mus musculus (Mouse) protein is Ribonuclease inhibitor (Rnh1).